A 138-amino-acid polypeptide reads, in one-letter code: Acidic phospholipase A2 Ts-A6 (138 aa).

The signal sequence occupies residues 1-16; sequence MRALWIMAVLLLGVEG. Intrachain disulfides connect Cys-42/Cys-131, Cys-44/Cys-60, Cys-59/Cys-111, Cys-65/Cys-138, Cys-66/Cys-104, Cys-73/Cys-97, and Cys-91/Cys-102. Ca(2+) contacts are provided by Tyr-43, Gly-45, and Gly-47. His-63 is a catalytic residue. Residue Asp-64 coordinates Ca(2+). Residue Asp-105 is part of the active site.

Ca(2+) serves as cofactor. In terms of tissue distribution, expressed by the venom gland.

The protein resides in the secreted. The catalysed reaction is a 1,2-diacyl-sn-glycero-3-phosphocholine + H2O = a 1-acyl-sn-glycero-3-phosphocholine + a fatty acid + H(+). Its function is as follows. Snake venom phospholipase A2 (PLA2) that shows a moderate inhibition of ADP-induced human platelet aggregation when tested on platelet rich plasma. Exhibits high hydrolytic activities and prefers the anionic micelles (dPPC with deoxycholate) to the zwitterionic micelles (dPPC with Triton X-100). PLA2 catalyzes the calcium-dependent hydrolysis of the 2-acyl groups in 3-sn-phosphoglycerides. In Trimeresurus stejnegeri (Chinese green tree viper), this protein is Acidic phospholipase A2 Ts-A6.